A 177-amino-acid polypeptide reads, in one-letter code: Large ribosomal subunit protein uL5 (177 aa).

The protein belongs to the universal ribosomal protein uL5 family. In terms of assembly, part of the 50S ribosomal subunit; part of the 5S rRNA/L5/L18/L25 subcomplex. Contacts the 5S rRNA and the P site tRNA. Forms a bridge to the 30S subunit in the 70S ribosome.

In terms of biological role, this is one of the proteins that bind and probably mediate the attachment of the 5S RNA into the large ribosomal subunit, where it forms part of the central protuberance. In the 70S ribosome it contacts protein S13 of the 30S subunit (bridge B1b), connecting the 2 subunits; this bridge is implicated in subunit movement. Contacts the P site tRNA; the 5S rRNA and some of its associated proteins might help stabilize positioning of ribosome-bound tRNAs. The polypeptide is Large ribosomal subunit protein uL5 (Ehrlichia canis (strain Jake)).